Here is a 470-residue protein sequence, read N- to C-terminus: Myricetin 3-O-rhamnoside 1,2-glucosyltransferase UGT709G2 (470 aa).

His20 (proton acceptor) is an active-site residue. His20 contributes to the an anthocyanidin binding site. The active-site Charge relay is Asp117. Positions 340, 342, 357, 360, 361, 362, and 365 each coordinate UDP-alpha-D-glucose. An an anthocyanidin-binding site is contributed by Ala380. Asp381 and Gln382 together coordinate UDP-alpha-D-glucose.

It belongs to the UDP-glycosyltransferase family. In terms of tissue distribution, expressed in young cromes.

It catalyses the reaction myricetin 3-O-alpha-L-rhamnoside + UDP-alpha-D-glucose = myricetin 3-O-[beta-D-glucosyl-(1-&gt;2)-alpha-L-rhamnoside] + UDP + H(+). Its pathway is flavonoid metabolism. Glucosyltransferase involved in montbretin A (MbA) biosynthesis. Catalyzes the glucosylation of myricetin 3-O-alpha-L-rhamnoside (MR) to produce myricetin 3-O-[beta-D-glucosyl-(1-&gt;2)-alpha-L-rhamnoside] (MRG), a precursor of MbA. MbA is a potent inhibitor of human pancreatic alpha-amylase and is being developed as drug candidate to treat type-2 diabetes. In vitro, is able to transfer UDP-xylose with 50-fold less efficiency compared with UDP-glucose. In vitro, can use myricetin 3-O-glucoside and quercetin 3-O-glucoside as substrates, although these two flavonoids may not be physiological substrates in vivo. The sequence is that of Myricetin 3-O-rhamnoside 1,2-glucosyltransferase UGT709G2 from Crocosmia x crocosmiiflora (Montbretia).